The following is a 329-amino-acid chain: 4-hydroxythreonine-4-phosphate dehydrogenase (329 aa).

Substrate contacts are provided by histidine 136 and threonine 137. Histidine 166, histidine 211, and histidine 266 together coordinate a divalent metal cation. Substrate-binding residues include lysine 274, asparagine 283, and arginine 292.

The protein belongs to the PdxA family. Homodimer. Requires Zn(2+) as cofactor. It depends on Mg(2+) as a cofactor. Co(2+) is required as a cofactor.

It localises to the cytoplasm. It carries out the reaction 4-(phosphooxy)-L-threonine + NAD(+) = 3-amino-2-oxopropyl phosphate + CO2 + NADH. It functions in the pathway cofactor biosynthesis; pyridoxine 5'-phosphate biosynthesis; pyridoxine 5'-phosphate from D-erythrose 4-phosphate: step 4/5. Catalyzes the NAD(P)-dependent oxidation of 4-(phosphooxy)-L-threonine (HTP) into 2-amino-3-oxo-4-(phosphooxy)butyric acid which spontaneously decarboxylates to form 3-amino-2-oxopropyl phosphate (AHAP). This chain is 4-hydroxythreonine-4-phosphate dehydrogenase, found in Neisseria meningitidis serogroup B (strain ATCC BAA-335 / MC58).